A 55-amino-acid chain; its full sequence is Large ribosomal subunit protein bL33A (55 aa).

The protein belongs to the bacterial ribosomal protein bL33 family.

This chain is Large ribosomal subunit protein bL33A, found in Mycobacterium sp. (strain JLS).